A 560-amino-acid chain; its full sequence is 2-succinyl-5-enolpyruvyl-6-hydroxy-3-cyclohexene-1-carboxylate synthase (560 aa).

This sequence belongs to the TPP enzyme family. MenD subfamily. Homodimer. The cofactor is Mg(2+). It depends on Mn(2+) as a cofactor. Thiamine diphosphate serves as cofactor.

It catalyses the reaction isochorismate + 2-oxoglutarate + H(+) = 5-enolpyruvoyl-6-hydroxy-2-succinyl-cyclohex-3-ene-1-carboxylate + CO2. Its pathway is quinol/quinone metabolism; 1,4-dihydroxy-2-naphthoate biosynthesis; 1,4-dihydroxy-2-naphthoate from chorismate: step 2/7. It participates in quinol/quinone metabolism; menaquinone biosynthesis. Functionally, catalyzes the thiamine diphosphate-dependent decarboxylation of 2-oxoglutarate and the subsequent addition of the resulting succinic semialdehyde-thiamine pyrophosphate anion to isochorismate to yield 2-succinyl-5-enolpyruvyl-6-hydroxy-3-cyclohexene-1-carboxylate (SEPHCHC). This chain is 2-succinyl-5-enolpyruvyl-6-hydroxy-3-cyclohexene-1-carboxylate synthase, found in Pectobacterium atrosepticum (strain SCRI 1043 / ATCC BAA-672) (Erwinia carotovora subsp. atroseptica).